Reading from the N-terminus, the 200-residue chain is Holliday junction branch migration complex subunit RuvA (200 aa).

The domain I stretch occupies residues 1 to 64 (MIGQLTGLVG…EDAIQLFGFA (64 aa)). Residues 65–143 (TTDERDWFRL…KMPGGGGTVS (79 aa)) form a domain II region. The tract at residues 144 to 148 (APGIV) is flexible linker. Positions 149–200 (SGPSVENDALLALAGLGFRRAEAWPVLSKVLAENENATLDLAIRLSLKDLAR) are domain III.

The protein belongs to the RuvA family. Homotetramer. Forms an RuvA(8)-RuvB(12)-Holliday junction (HJ) complex. HJ DNA is sandwiched between 2 RuvA tetramers; dsDNA enters through RuvA and exits via RuvB. An RuvB hexamer assembles on each DNA strand where it exits the tetramer. Each RuvB hexamer is contacted by two RuvA subunits (via domain III) on 2 adjacent RuvB subunits; this complex drives branch migration. In the full resolvosome a probable DNA-RuvA(4)-RuvB(12)-RuvC(2) complex forms which resolves the HJ.

The protein localises to the cytoplasm. In terms of biological role, the RuvA-RuvB-RuvC complex processes Holliday junction (HJ) DNA during genetic recombination and DNA repair, while the RuvA-RuvB complex plays an important role in the rescue of blocked DNA replication forks via replication fork reversal (RFR). RuvA specifically binds to HJ cruciform DNA, conferring on it an open structure. The RuvB hexamer acts as an ATP-dependent pump, pulling dsDNA into and through the RuvAB complex. HJ branch migration allows RuvC to scan DNA until it finds its consensus sequence, where it cleaves and resolves the cruciform DNA. This Gluconobacter oxydans (strain 621H) (Gluconobacter suboxydans) protein is Holliday junction branch migration complex subunit RuvA.